We begin with the raw amino-acid sequence, 382 residues long: MNRPSWSTAFNIGGGFPIQWYGIIVSIGIIFAILMFVFKLIYCYKLQDNSFYFFIFIAVLTMVLGARLWSFVIGDSNFANNNFFDFRNGGLAIQGGILLTSIVGVIYFNFFLNSKTNKTKTIAELLNNKNEIKAVYVERNISVLVMLDLIAPCVLIGQAIGRWGNFFNQEVYGFALAGTMNDPQALANTQWGFLKILMPKVWDGMWIDGQFRIPLFLIESFFNTIFFVLIYFVMDFIRGVKSGTIGFSYFLATGIIRLILENFRDQTFYFQTSITTSILFIVVGILGIFYCQFIHVKLRNYFWTYFFLYAFYKVAAFFTTLFLNNRKQMAQQKFAFYEKSLPNKKRSFFEMKYYNDVTTPKIYRLTDQEMKLFDKLEAVTTS.

The next 3 membrane-spanning stretches (helical) occupy residues 18-38, 53-73, and 91-111; these read IQWY…MFVF, FFIF…SFVI, and LAIQ…FNFF. R162 lines the a 1,2-diacyl-sn-glycero-3-phospho-(1'-sn-glycerol) pocket. 4 consecutive transmembrane segments (helical) span residues 213–233, 243–263, 274–294, and 302–322; these read IPLF…IYFV, GTIG…LENF, ITTS…CQFI, and FWTY…TTLF.

The protein belongs to the Lgt family.

Its subcellular location is the cell membrane. It carries out the reaction L-cysteinyl-[prolipoprotein] + a 1,2-diacyl-sn-glycero-3-phospho-(1'-sn-glycerol) = an S-1,2-diacyl-sn-glyceryl-L-cysteinyl-[prolipoprotein] + sn-glycerol 1-phosphate + H(+). It participates in protein modification; lipoprotein biosynthesis (diacylglyceryl transfer). Functionally, catalyzes the transfer of the diacylglyceryl group from phosphatidylglycerol to the sulfhydryl group of the N-terminal cysteine of a prolipoprotein, the first step in the formation of mature lipoproteins. The chain is Phosphatidylglycerol--prolipoprotein diacylglyceryl transferase from Mycoplasma genitalium (strain ATCC 33530 / DSM 19775 / NCTC 10195 / G37) (Mycoplasmoides genitalium).